The following is a 370-amino-acid chain: Probable aspartic-type endopeptidase ARB_04018 (370 aa).

An N-terminal signal peptide occupies residues 1-21 (MWHSPFSTAFTLFLGFFTLTL). Asn80 and Asn102 each carry an N-linked (GlcNAc...) asparagine glycan. The region spanning 94-367 (FVNEITIGND…DHDGPKMGFA (274 aa)) is the Peptidase A1 domain. Asp110 is a catalytic residue. Asn251 is a glycosylation site (N-linked (GlcNAc...) asparagine). Residue Asp261 is part of the active site. Residue Asn298 is glycosylated (N-linked (GlcNAc...) asparagine).

This sequence belongs to the peptidase A1 family.

Its subcellular location is the secreted. Its function is as follows. Probable aspartic-type endopeptidase which contributes to virulence. The chain is Probable aspartic-type endopeptidase ARB_04018 from Arthroderma benhamiae (strain ATCC MYA-4681 / CBS 112371) (Trichophyton mentagrophytes).